The following is a 170-amino-acid chain: MKYGIAIFPSKTIQDQANALRKRYDPRYSLIPPHLTLKESFEADEETLSETVEELRKIAKETEPFHIQINKVSTFEPVTNTIYFKVEPIQQLNDLHTKLHEGKFDDNQTHPFVPHITIAQDLEHDEFSDILGRLQMEGFNLEDYVDRFQLLYQLDNESWTVYQTFVLGRD.

Residue His34 is the Proton donor of the active site. 2 short sequence motifs (HXTX) span residues 34–37 (HLTL) and 115–118 (HITI). The active-site Proton acceptor is the His115.

It belongs to the 2H phosphoesterase superfamily. YjcG family.

The chain is Putative phosphoesterase OB1230 from Oceanobacillus iheyensis (strain DSM 14371 / CIP 107618 / JCM 11309 / KCTC 3954 / HTE831).